A 108-amino-acid chain; its full sequence is UPF0060 membrane protein RSKD131_0092 (108 aa).

The next 4 membrane-spanning stretches (helical) occupy residues 5–25, 32–52, 62–82, and 86–106; these read LAAY…VWAW, ALWL…LALT, AVYG…VEGV, and RWDM…LWAP.

The protein belongs to the UPF0060 family.

Its subcellular location is the cell inner membrane. The sequence is that of UPF0060 membrane protein RSKD131_0092 from Cereibacter sphaeroides (strain KD131 / KCTC 12085) (Rhodobacter sphaeroides).